A 399-amino-acid polypeptide reads, in one-letter code: Chorismate synthase (399 aa).

Residues 41 to 72 (IQKDLDRRKPGQSMITTSRGEPDKVTINSGIQ) form a disordered region. Residue Arg48 coordinates NADP(+). FMN is bound by residues 125 to 127 (RSS), Gly288, 303 to 307 (HAPVS), and Arg330. Composition is skewed to basic and acidic residues over residues 363-377 (PDRLDGRPGEYDTDY) and 389-399 (ADTHAKTIDDD). Positions 363-399 (PDRLDGRPGEYDTDYHPSSPQNDPEDADTHAKTIDDD) are disordered.

It belongs to the chorismate synthase family. The cofactor is FMNH2.

The catalysed reaction is 5-O-(1-carboxyvinyl)-3-phosphoshikimate = chorismate + phosphate. Its pathway is metabolic intermediate biosynthesis; chorismate biosynthesis; chorismate from D-erythrose 4-phosphate and phosphoenolpyruvate: step 7/7. Catalyzes the anti-1,4-elimination of the C-3 phosphate and the C-6 proR hydrogen from 5-enolpyruvylshikimate-3-phosphate (EPSP) to yield chorismate, which is the branch point compound that serves as the starting substrate for the three terminal pathways of aromatic amino acid biosynthesis. This reaction introduces a second double bond into the aromatic ring system. This Haloarcula marismortui (strain ATCC 43049 / DSM 3752 / JCM 8966 / VKM B-1809) (Halobacterium marismortui) protein is Chorismate synthase.